The following is a 331-amino-acid chain: UDP-N-acetylenolpyruvoylglucosamine reductase (331 aa).

The region spanning 54 to 221 (RVGGAAELYV…TQATFQLQPG (168 aa)) is the FAD-binding PCMH-type domain. Arg-200 is a catalytic residue. The active-site Proton donor is Ser-251. Glu-321 is a catalytic residue.

It belongs to the MurB family. FAD serves as cofactor.

It is found in the cytoplasm. It catalyses the reaction UDP-N-acetyl-alpha-D-muramate + NADP(+) = UDP-N-acetyl-3-O-(1-carboxyvinyl)-alpha-D-glucosamine + NADPH + H(+). Its pathway is cell wall biogenesis; peptidoglycan biosynthesis. Cell wall formation. The polypeptide is UDP-N-acetylenolpyruvoylglucosamine reductase (Trichormus variabilis (strain ATCC 29413 / PCC 7937) (Anabaena variabilis)).